Consider the following 213-residue polypeptide: Protein arginine N-methyltransferase SFM1 (213 aa).

A phosphoserine mark is found at serine 204 and serine 207.

Belongs to the class IV-like SAM-binding methyltransferase superfamily. Protein arginine N-methyltransferase SFM1 family.

The protein resides in the cytoplasm. Functionally, S-adenosyl-L-methionine-dependent protein-arginine N-methyltransferase that monomethylates ribosomal protein S3 (RPS3) at 'Arg-146'. The sequence is that of Protein arginine N-methyltransferase SFM1 from Saccharomyces cerevisiae (strain ATCC 204508 / S288c) (Baker's yeast).